The primary structure comprises 235 residues: Proteasome subunit alpha type-2-B (235 aa).

Lys64 is covalently cross-linked (Glycyl lysine isopeptide (Lys-Gly) (interchain with G-Cter in ubiquitin)).

The protein belongs to the peptidase T1A family. In terms of assembly, component of the 20S core complex of the 26S proteasome. The 26S proteasome is composed of a core protease (CP), known as the 20S proteasome, capped at one or both ends by the 19S regulatory particle (RP/PA700). The 20S proteasome core is composed of 28 subunits that are arranged in four stacked rings, resulting in a barrel-shaped structure. The two end rings are each formed by seven alpha subunits, and the two central rings are each formed by seven beta subunits. The catalytic chamber with the active sites is on the inside of the barrel.

It localises to the cytoplasm. The protein resides in the nucleus. Its function is as follows. The proteasome is a multicatalytic proteinase complex which is characterized by its ability to cleave peptides with Arg, Phe, Tyr, Leu, and Glu adjacent to the leaving group at neutral or slightly basic pH. The proteasome has an ATP-dependent proteolytic activity. The chain is Proteasome subunit alpha type-2-B (PAB2) from Arabidopsis thaliana (Mouse-ear cress).